We begin with the raw amino-acid sequence, 207 residues long: MSAKKASQPMLNTTGSLQEGEMGKMFHGKCLRIVSPESPAKLYCCYGVIMVLSVAVVALSVALSVKMTPQISTINTYAACPRNWIGVGNKCFYFSEYASNWTFSQTFCKAQEAELARFDTEEELNFLSRYKGSFDYWIGLHRESSEHPWKWTDNTQYNYSLSIRGVERYAYLNDIGISSARVYADKRWSCSKLNSYSLQCKTPFSPM.

Over 1–44 (MSAKKASQPMLNTTGSLQEGEMGKMFHGKCLRIVSPESPAKLYC) the chain is Cytoplasmic. S7 and S16 each carry phosphoserine. A helical; Signal-anchor for type II membrane protein membrane pass occupies residues 45 to 65 (CYGVIMVLSVAVVALSVALSV). At 66–207 (KMTPQISTIN…LQCKTPFSPM (142 aa)) the chain is on the extracellular side. Positions 87 to 198 (VGNKCFYFSE…SCSKLNSYSL (112 aa)) constitute a C-type lectin domain. N100 carries N-linked (GlcNAc...) asparagine glycosylation.

It is found in the cell membrane. Receptor for KLRB1B that protects target cells against natural killer cell-mediated lysis. In Rattus norvegicus (Rat), this protein is C-type lectin domain family 2 member D11 (Clec2d11).